Reading from the N-terminus, the 300-residue chain is Estradiol 17-beta-dehydrogenase 11 (300 aa).

A signal peptide spans Met1–Cys18. Leu40–Asp67 contributes to the NADP(+) binding site. A substrate-binding site is contributed by Ser172. Tyr185 functions as the Proton acceptor in the catalytic mechanism. Residue Lys189 participates in NADP(+) binding.

This sequence belongs to the short-chain dehydrogenases/reductases (SDR) family. 17-beta-HSD 3 subfamily.

It is found in the endoplasmic reticulum. Its subcellular location is the lipid droplet. It catalyses the reaction 17beta-estradiol + NAD(+) = estrone + NADH + H(+). It carries out the reaction 17beta-estradiol + NADP(+) = estrone + NADPH + H(+). Functionally, can convert androstan-3-alpha,17-beta-diol (3-alpha-diol) to androsterone in vitro, suggesting that it may participate in androgen metabolism during steroidogenesis. May act by metabolizing compounds that stimulate steroid synthesis and/or by generating metabolites that inhibit it. Has no activity toward DHEA (dehydroepiandrosterone), or A-dione (4-androste-3,17-dione), and only a slight activity toward testosterone to A-dione. This chain is Estradiol 17-beta-dehydrogenase 11 (HSD17B11), found in Macaca fascicularis (Crab-eating macaque).